A 1888-amino-acid polypeptide reads, in one-letter code: E3 ubiquitin-protein ligase UBR3 (1888 aa).

Residues 1 to 24 (MAAAAAAAVGGQQPSQPELPAPGL) form a disordered region. The segment at 118–189 (ALCGLVWTAN…ESGFCKRHQI (72 aa)) adopts a UBR-type zinc-finger fold. The disordered stretch occupies residues 339–362 (GQVDSSDEDDQDGSQGLGKRKRVK). Phosphoserine occurs at positions 343 and 344. A run of 2 helical transmembrane segments spans residues 761–781 (MLEG…HLGM) and 919–939 (LLHC…ILMD). Disordered stretches follow at residues 1008–1028 (APEV…GSLQ) and 1164–1186 (VPPK…RQKA). The span at 1016 to 1028 (PASTSSDNLGSLQ) shows a compositional bias: polar residues. The stretch at 1168-1199 (KVTAAEKKTLDKEERRQKARERQQKLLAEFAS) forms a coiled coil. Positions 1170 to 1186 (TAAEKKTLDKEERRQKA) are enriched in basic and acidic residues. Position 1199 is a phosphoserine (Ser-1199). The RING-type; degenerate zinc-finger motif lies at 1306–1364 (DSSCLLAVSIGWEGGVYVQTCGHTLHIDCHKSYMESLRNDQVLQGFSVDKGEFTCPLCR). A helical membrane pass occupies residues 1806–1826 (QNCGAGTGIFLLINASVIIII).

Belongs to the E3 ubiquitin-protein ligase UBR1-like family. Interacts with UBE2A and UBE2B.

It is found in the membrane. The catalysed reaction is S-ubiquitinyl-[E2 ubiquitin-conjugating enzyme]-L-cysteine + [acceptor protein]-L-lysine = [E2 ubiquitin-conjugating enzyme]-L-cysteine + N(6)-ubiquitinyl-[acceptor protein]-L-lysine.. It functions in the pathway protein modification; protein ubiquitination. E3 ubiquitin-protein ligase which is a component of the N-end rule pathway. Does not bind to proteins bearing specific N-terminal residues that are destabilizing according to the N-end rule, leading to their ubiquitination and subsequent degradation. May play a role in Shh signaling by mediating the ubiquitination of Kif7. May be important for MYH9 function in certain tissues, possibly by regulating the ubiquitination of MYH9 and consequently affecting its interaction with MYO7A. This chain is E3 ubiquitin-protein ligase UBR3 (UBR3), found in Homo sapiens (Human).